Reading from the N-terminus, the 412-residue chain is Multifunctional CCA protein (412 aa).

The ATP site is built by Gly8 and Arg11. CTP-binding residues include Gly8 and Arg11. Asp21 and Asp23 together coordinate Mg(2+). Residues Arg91, Arg137, and Arg140 each coordinate ATP. 3 residues coordinate CTP: Arg91, Arg137, and Arg140. In terms of domain architecture, HD spans 228–329 (TGIHTMMVLA…LKVFDKADAW (102 aa)).

The protein belongs to the tRNA nucleotidyltransferase/poly(A) polymerase family. Bacterial CCA-adding enzyme type 1 subfamily. Monomer. Can also form homodimers and oligomers. Mg(2+) serves as cofactor. It depends on Ni(2+) as a cofactor.

The enzyme catalyses a tRNA precursor + 2 CTP + ATP = a tRNA with a 3' CCA end + 3 diphosphate. The catalysed reaction is a tRNA with a 3' CCA end + 2 CTP + ATP = a tRNA with a 3' CCACCA end + 3 diphosphate. Functionally, catalyzes the addition and repair of the essential 3'-terminal CCA sequence in tRNAs without using a nucleic acid template. Adds these three nucleotides in the order of C, C, and A to the tRNA nucleotide-73, using CTP and ATP as substrates and producing inorganic pyrophosphate. tRNA 3'-terminal CCA addition is required both for tRNA processing and repair. Also involved in tRNA surveillance by mediating tandem CCA addition to generate a CCACCA at the 3' terminus of unstable tRNAs. While stable tRNAs receive only 3'-terminal CCA, unstable tRNAs are marked with CCACCA and rapidly degraded. The polypeptide is Multifunctional CCA protein (Aeromonas hydrophila subsp. hydrophila (strain ATCC 7966 / DSM 30187 / BCRC 13018 / CCUG 14551 / JCM 1027 / KCTC 2358 / NCIMB 9240 / NCTC 8049)).